Consider the following 200-residue polypeptide: Small ribosomal subunit protein uS4 (200 aa).

The tract at residues 20 to 41 (SGTGKELEKRPYAPGQHGPNQR) is disordered. The S4 RNA-binding domain maps to 92–155 (ARLDAVVYSL…LKLDIIAESV (64 aa)).

It belongs to the universal ribosomal protein uS4 family. Part of the 30S ribosomal subunit. Contacts protein S5. The interaction surface between S4 and S5 is involved in control of translational fidelity.

One of the primary rRNA binding proteins, it binds directly to 16S rRNA where it nucleates assembly of the body of the 30S subunit. Functionally, with S5 and S12 plays an important role in translational accuracy. In Staphylococcus saprophyticus subsp. saprophyticus (strain ATCC 15305 / DSM 20229 / NCIMB 8711 / NCTC 7292 / S-41), this protein is Small ribosomal subunit protein uS4.